The following is a 293-amino-acid chain: 4-diphosphocytidyl-2-C-methyl-D-erythritol kinase (293 aa).

The active site involves K10. P96 to S106 contacts ATP. D138 is a catalytic residue.

Belongs to the GHMP kinase family. IspE subfamily.

The enzyme catalyses 4-CDP-2-C-methyl-D-erythritol + ATP = 4-CDP-2-C-methyl-D-erythritol 2-phosphate + ADP + H(+). It functions in the pathway isoprenoid biosynthesis; isopentenyl diphosphate biosynthesis via DXP pathway; isopentenyl diphosphate from 1-deoxy-D-xylulose 5-phosphate: step 3/6. Functionally, catalyzes the phosphorylation of the position 2 hydroxy group of 4-diphosphocytidyl-2C-methyl-D-erythritol. The protein is 4-diphosphocytidyl-2-C-methyl-D-erythritol kinase of Caulobacter sp. (strain K31).